The chain runs to 95 residues: Aspartyl/glutamyl-tRNA(Asn/Gln) amidotransferase subunit C (95 aa).

The disordered stretch occupies residues 51–95; that stretch reads PTSHATLTSSRLREDVTRPSLPPEKSLANAPAKSDTSFAVPKIIE.

It belongs to the GatC family. As to quaternary structure, heterotrimer of A, B and C subunits.

The catalysed reaction is L-glutamyl-tRNA(Gln) + L-glutamine + ATP + H2O = L-glutaminyl-tRNA(Gln) + L-glutamate + ADP + phosphate + H(+). It catalyses the reaction L-aspartyl-tRNA(Asn) + L-glutamine + ATP + H2O = L-asparaginyl-tRNA(Asn) + L-glutamate + ADP + phosphate + 2 H(+). Allows the formation of correctly charged Asn-tRNA(Asn) or Gln-tRNA(Gln) through the transamidation of misacylated Asp-tRNA(Asn) or Glu-tRNA(Gln) in organisms which lack either or both of asparaginyl-tRNA or glutaminyl-tRNA synthetases. The reaction takes place in the presence of glutamine and ATP through an activated phospho-Asp-tRNA(Asn) or phospho-Glu-tRNA(Gln). The polypeptide is Aspartyl/glutamyl-tRNA(Asn/Gln) amidotransferase subunit C (Myxococcus xanthus (strain DK1622)).